Reading from the N-terminus, the 502-residue chain is Cytochrome P450 71B20 (502 aa).

Residues 1 to 21 traverse the membrane as a helical segment; the sequence is MAISFLCFCLITLASLIFFAK. Cys444 is a heme binding site.

The protein belongs to the cytochrome P450 family. The cofactor is heme.

Its subcellular location is the membrane. In Arabidopsis thaliana (Mouse-ear cress), this protein is Cytochrome P450 71B20 (CYP71B20).